Reading from the N-terminus, the 591-residue chain is PDZ and LIM domain protein 5 (591 aa).

Serine 2 carries the post-translational modification N-acetylserine. A Phosphoserine modification is found at serine 2. The 84-residue stretch at 2 to 85 (SNYNVSLVGP…SLNMTLQRAS (84 aa)) folds into the PDZ domain. An N6-acetyllysine; alternate modification is found at lysine 89. Lysine 89 is modified (N6-succinyllysine; alternate). A Glycyl lysine isopeptide (Lys-Gly) (interchain with G-Cter in SUMO2); alternate cross-link involves residue lysine 89. Phosphoserine is present on residues serine 111, serine 134, and serine 137. Disordered stretches follow at residues 125-240 (YNKV…GPPR) and 255-334 (THSD…SNRP). Residues 134 to 143 (SVSSPKVTSI) are compositionally biased toward polar residues. Over residues 144–161 (PSPSSAFTPAHAATSSHA) the composition is skewed to low complexity. Positions 162 to 174 (SPPPVAAVTPPPL) are enriched in pro residues. 2 stretches are compositionally biased toward polar residues: residues 183 to 195 (ANPS…SPPN) and 207 to 217 (PTVTSVCSESA). Serine 228 and serine 260 each carry phosphoserine. 2 stretches are compositionally biased toward basic and acidic residues: residues 258-273 (DASK…DWRP) and 293-304 (EHLKESENDNAK). Over residues 310–329 (PEPSQQSASPLSAAESLESP) the composition is skewed to low complexity. A phosphoserine mark is found at serine 313 and serine 318. Residue lysine 346 is modified to N6-acetyllysine. The segment at 348–398 (VGSTSVKSPSWQRPNQAAPSTGRISNSASSSGTGAPMKPAVGPPQPSDQDT) is disordered. The segment covering 349–380 (GSTSVKSPSWQRPNQAAPSTGRISNSASSSGT) has biased composition (polar residues). Phosphoserine is present on residues serine 355 and serine 357. LIM zinc-binding domains are found at residues 413–472 (PMCA…FFAP), 472–531 (PECG…LFGT), and 531–591 (TICR…SVNF).

In terms of assembly, interacts with various PKC isoforms through the LIM domains. Interacts with actin and alpha-actinin through the PDZ domain. Interacts (via LIM domains) with SIPA1L1/SPAR; this interaction may occur preferentially with isoform 1. In terms of tissue distribution, detected in brain, in neurons, including in hippocampal neurons, and glial cells (at protein level). Detected in heart and skeletal muscle.

The protein localises to the postsynaptic density. It localises to the presynapse. The protein resides in the postsynapse. Its subcellular location is the cytoplasm. It is found in the cytosol. May play an important role in the heart development by scaffolding PKC to the Z-disk region. May play a role in the regulation of cardiomyocyte expansion. Isoforms lacking the LIM domains may negatively modulate the scaffolding activity of isoform 1. Overexpression promotes the development of heart hypertrophy. Contributes to the regulation of dendritic spine morphogenesis in neurons. May be required to restrain postsynaptic growth of excitatory synapses. Isoform 1, but not isoform 2, expression favors spine thinning and elongation. The polypeptide is PDZ and LIM domain protein 5 (Pdlim5) (Rattus norvegicus (Rat)).